A 425-amino-acid chain; its full sequence is MFGIDEVKIAIIGLGYVGLPLAVEFGKSRQVVGFDVNKKRILELKNGVDVNLETTEEELREARYLKFTSEIEKIKECNFYIITVPTPINTYKQPDLTPLIKASETVGTVLNRGDIVVYESTVYPGCTEEECVPILARMSGMTFNQDFYVGYSPERINPGDKKHRLTNIKKITSGSTAQIAELIDEVYQQIISAGTYKAESIKVAEAAKVIENTQRDLNIALVNELAIIFNRLNIDTEAVLRAAGSKWNFLPFRPGLVGGHCIGVDPYYLTHKSQGIGYYPEIILAGRRLNDNMGNYVSEQLIKAMIKKGINVEGSSVLILGFTFKENCPDIRNTRIIDVVKELGKYSCKVDIFDPWVDAEEVRREYGIIPVSEVKSSHYDAIIVAVGHQQFKQMGSEDIRGFGKDKHVLYDLKYVLPAEQSDVRL.

Residues V17, D35, R40, T86, and T121 each coordinate NAD(+). The active-site Nucleophile is the C261. R332 is a binding site for NAD(+).

This sequence belongs to the UDP-glucose/GDP-mannose dehydrogenase family. Homotrimer.

The catalysed reaction is UDP-N-acetyl-alpha-D-glucosamine + 2 NAD(+) + H2O = UDP-2-acetamido-2-deoxy-alpha-D-glucuronate + 2 NADH + 3 H(+). It functions in the pathway capsule biogenesis; capsule polysaccharide biosynthesis. The protein operates within glycan metabolism; Vi-antigen biosynthesis. Dehydrogenase required for the biosynthesis of the capsular polysaccharide, commonly referred as the Vi antigen, an important virulence factor. Catalyzes the conversion of UDP-N-acetylglucosamine (UDP-GlcNAc) to UDP-N-acetylglucosaminuronic acid (UDP-GlcNAcA). Cannot use UDP-GalNAc, UDP-Glc and UDP-Gal as substrates. The sequence is that of UDP-N-acetyl-D-glucosamine 6-dehydrogenase from Salmonella typhi.